Consider the following 195-residue polypeptide: Protein GrpE (195 aa).

It belongs to the GrpE family. Homodimer.

It is found in the cytoplasm. Functionally, participates actively in the response to hyperosmotic and heat shock by preventing the aggregation of stress-denatured proteins, in association with DnaK and GrpE. It is the nucleotide exchange factor for DnaK and may function as a thermosensor. Unfolded proteins bind initially to DnaJ; upon interaction with the DnaJ-bound protein, DnaK hydrolyzes its bound ATP, resulting in the formation of a stable complex. GrpE releases ADP from DnaK; ATP binding to DnaK triggers the release of the substrate protein, thus completing the reaction cycle. Several rounds of ATP-dependent interactions between DnaJ, DnaK and GrpE are required for fully efficient folding. In Blochmanniella pennsylvanica (strain BPEN), this protein is Protein GrpE.